The following is a 187-amino-acid chain: Orotate phosphoribosyltransferase (187 aa).

5-phospho-alpha-D-ribose 1-diphosphate-binding positions include arginine 98, lysine 99, lysine 102, histidine 104, and 128-136 (EDVTTTGGS). Threonine 132 and arginine 160 together coordinate orotate.

This sequence belongs to the purine/pyrimidine phosphoribosyltransferase family. PyrE subfamily. Homodimer. Mg(2+) serves as cofactor.

The enzyme catalyses orotidine 5'-phosphate + diphosphate = orotate + 5-phospho-alpha-D-ribose 1-diphosphate. The protein operates within pyrimidine metabolism; UMP biosynthesis via de novo pathway; UMP from orotate: step 1/2. Its function is as follows. Catalyzes the transfer of a ribosyl phosphate group from 5-phosphoribose 1-diphosphate to orotate, leading to the formation of orotidine monophosphate (OMP). The protein is Orotate phosphoribosyltransferase of Bradyrhizobium diazoefficiens (strain JCM 10833 / BCRC 13528 / IAM 13628 / NBRC 14792 / USDA 110).